A 919-amino-acid polypeptide reads, in one-letter code: MKFAYRFSNLLGTVYRRGNLNFTCDGNSVISPVGNRVTVFDLKNNKSDTLPLATRYNVKCVGLSPDGRLAIIVDEGGDALLVSLVCRSVLHHFHFKGSVHSVSFSPDGRKFVVTKGNIAQMYHAPGKKREFNAFVLDKTYFGPYDETTCIDWTDDSRCFVVGSKDMSTWVFGAERWDNLIYYALGGHKDAIVACFFESNSLDLYSLSQDGVLCMWQCDTPPEGLRLKPPAGWKADLLQREEEEEEEEDQEGDRETTIRGKATPAEEEKTGKVKYSRLAKYFFNKEGDFNNLTAAAFHKKSHLLVTGFASGIFHLHELPEFNLIHSLSISDQSIASVAINSSGDWIAFGCSGLGQLLVWEWQSESYVLKQQGHFNSMVALAYSPDGQYIVTGGDDGKVKVWNTLSGFCFVTFTEHSSGVTGVTFTATGYVVVTSSMDGTVRAFDLHRYRNFRTFTSPRPTQFSCVAVDASGEIVSAGAQDSFEIFVWSMQTGRLLDVLSGHEGPISGLCFNPMKSVLASASWDKTVRLWDMFDSWRTKETLALTSDALAVTFRPDGAELAVATLNSQITFWDPENAVQTGSIEGRHDLKTGRKELDKITAKHAAKGKAFTALCYSADGHSILAGGMSKFVCIYHVREQILMKRFEISCNLSLDAMEEFLNRRKMTEFGNLALIDQDAGQEDGVAIPLPGVRKGDMSSRHFKPEIRVTSLRFSPTGRCWAATTTEGLLIYSLDTRVLFDPFELDTSVTPGRVREALRQQDFTRAILMALRLNESKLVQEALEAVPRGEIEVVTSSLPELYVEKVLEFLASSFEVSRHLEFYLLWTHKLLMLHGQKLKSRAGTLLPVIQFLQKSIQRHLDDLSKLCSWNHYNMQYALAVSKQRGTKRSLDPLGSEEEAEASEDDSLHLLGGGGRDSEEEMLA.

5 WD repeats span residues 12–50, 53–93, 94–132, 142–181, and 186–225; these read GTVY…SDTL, ATRY…LHHF, HFKG…REFN, GPYD…NLIY, and GHKD…EGLR. Positions 238–267 are disordered; it reads QREEEEEEEEDQEGDRETTIRGKATPAEEE. The span at 240–251 shows a compositional bias: acidic residues; it reads EEEEEEEEDQEG. Positions 252-267 are enriched in basic and acidic residues; that stretch reads DRETTIRGKATPAEEE. WD repeat units lie at residues 286-325, 328-368, 371-410, 413-452, 456-498, 499-538, 541-580, 603-642, and 700-740; these read GDFN…LIHS, ISDQ…YVLK, GHFN…CFVT, EHSS…NFRT, PRPT…DVLS, GHEG…RTKE, ALTS…QTGS, AKGK…LMKR, and KPEI…DPFE. Residues 882 to 919 are disordered; that stretch reads TKRSLDPLGSEEEAEASEDDSLHLLGGGGRDSEEEMLA. Over residues 890 to 900 the composition is skewed to acidic residues; the sequence is GSEEEAEASED. Ser-898 and Ser-902 each carry phosphoserine.

This sequence belongs to the WD repeat PWP2 family. In terms of assembly, part of the small subunit (SSU) processome, composed of more than 70 proteins and the RNA chaperone small nucleolar RNA (snoRNA) U3.

Its subcellular location is the nucleus. It localises to the nucleolus. Part of the small subunit (SSU) processome, first precursor of the small eukaryotic ribosomal subunit. During the assembly of the SSU processome in the nucleolus, many ribosome biogenesis factors, an RNA chaperone and ribosomal proteins associate with the nascent pre-rRNA and work in concert to generate RNA folding, modifications, rearrangements and cleavage as well as targeted degradation of pre-ribosomal RNA by the RNA exosome. The chain is Periodic tryptophan protein 2 homolog from Homo sapiens (Human).